A 144-amino-acid chain; its full sequence is Cytochrome c-type biogenesis protein CcmE (144 aa).

At Met1–Arg7 the chain is on the cytoplasmic side. Residues Ala8 to Ala28 form a helical; Signal-anchor for type II membrane protein membrane-spanning segment. The Extracellular segment spans residues Leu29 to Lys144. Heme contacts are provided by His121 and Tyr125.

This sequence belongs to the CcmE/CycJ family.

The protein resides in the cell membrane. Its function is as follows. Heme chaperone required for the biogenesis of c-type cytochromes. Transiently binds heme delivered by CcmC and transfers the heme to apo-cytochromes in a process facilitated by CcmF and CcmH. This is Cytochrome c-type biogenesis protein CcmE from Polynucleobacter asymbioticus (strain DSM 18221 / CIP 109841 / QLW-P1DMWA-1) (Polynucleobacter necessarius subsp. asymbioticus).